Here is a 499-residue protein sequence, read N- to C-terminus: Lysine--tRNA ligase (499 aa).

2 residues coordinate Mg(2+): Glu-407 and Glu-414.

This sequence belongs to the class-II aminoacyl-tRNA synthetase family. In terms of assembly, homodimer. Mg(2+) serves as cofactor.

It is found in the cytoplasm. It carries out the reaction tRNA(Lys) + L-lysine + ATP = L-lysyl-tRNA(Lys) + AMP + diphosphate. This chain is Lysine--tRNA ligase, found in Lactiplantibacillus plantarum (strain ATCC BAA-793 / NCIMB 8826 / WCFS1) (Lactobacillus plantarum).